Reading from the N-terminus, the 174-residue chain is NADH-ubiquinone oxidoreductase chain 6 (174 aa).

A run of 5 helical transmembrane segments spans residues 1-21 (MTYV…GFSS), 24-44 (SPIY…AIIL), 47-67 (GGGY…MVVF), 86-106 (VEVL…VLWV), and 151-171 (WLVV…IEIA).

This sequence belongs to the complex I subunit 6 family. In terms of assembly, core subunit of respiratory chain NADH dehydrogenase (Complex I) which is composed of 45 different subunits.

It is found in the mitochondrion inner membrane. The enzyme catalyses a ubiquinone + NADH + 5 H(+)(in) = a ubiquinol + NAD(+) + 4 H(+)(out). In terms of biological role, core subunit of the mitochondrial membrane respiratory chain NADH dehydrogenase (Complex I) which catalyzes electron transfer from NADH through the respiratory chain, using ubiquinone as an electron acceptor. Essential for the catalytic activity and assembly of complex I. The chain is NADH-ubiquinone oxidoreductase chain 6 (MT-ND6) from Gorilla gorilla gorilla (Western lowland gorilla).